The chain runs to 450 residues: Na(+)/H(+) antiporter NhaA 2 (450 aa).

12 helical membrane-spanning segments follow: residues 43 to 63 (VGGA…NSPW), 86 to 106 (LTLG…VVGL), 124 to 144 (ALPM…FVAV), 155 to 175 (GWAI…AVIS), 185 to 205 (FLLT…AVFY), 208 to 228 (EINL…ALCV), 234 to 254 (SWWL…ESGV), 258 to 278 (VAGV…AGGP), 299 to 319 (VAVP…VSGL), 326 to 346 (PITL…IFLT), 364 to 384 (WIDV…SLLI), and 398 to 418 (FVKV…AVLL).

The protein belongs to the NhaA Na(+)/H(+) (TC 2.A.33) antiporter family.

Its subcellular location is the cell membrane. The catalysed reaction is Na(+)(in) + 2 H(+)(out) = Na(+)(out) + 2 H(+)(in). Na(+)/H(+) antiporter that extrudes sodium in exchange for external protons. This is Na(+)/H(+) antiporter NhaA 2 from Mycobacterium sp. (strain JLS).